Here is a 194-residue protein sequence, read N- to C-terminus: Imidazole glycerol phosphate synthase subunit HisH (194 aa).

One can recognise a Glutamine amidotransferase type-1 domain in the interval 1–194; sequence MIIIDTGCAN…QLLKNFVENL (194 aa). Residue Cys75 is the Nucleophile of the active site. Residues His175 and Glu177 contribute to the active site.

Heterodimer of HisH and HisF.

The protein resides in the cytoplasm. The catalysed reaction is 5-[(5-phospho-1-deoxy-D-ribulos-1-ylimino)methylamino]-1-(5-phospho-beta-D-ribosyl)imidazole-4-carboxamide + L-glutamine = D-erythro-1-(imidazol-4-yl)glycerol 3-phosphate + 5-amino-1-(5-phospho-beta-D-ribosyl)imidazole-4-carboxamide + L-glutamate + H(+). The enzyme catalyses L-glutamine + H2O = L-glutamate + NH4(+). The protein operates within amino-acid biosynthesis; L-histidine biosynthesis; L-histidine from 5-phospho-alpha-D-ribose 1-diphosphate: step 5/9. Functionally, IGPS catalyzes the conversion of PRFAR and glutamine to IGP, AICAR and glutamate. The HisH subunit catalyzes the hydrolysis of glutamine to glutamate and ammonia as part of the synthesis of IGP and AICAR. The resulting ammonia molecule is channeled to the active site of HisF. This Mannheimia succiniciproducens (strain KCTC 0769BP / MBEL55E) protein is Imidazole glycerol phosphate synthase subunit HisH.